Here is a 283-residue protein sequence, read N- to C-terminus: 4-diphosphocytidyl-2-C-methyl-D-erythritol kinase (283 aa).

Lys10 is an active-site residue. Position 95-105 (Pro95–Ser105) interacts with ATP. Asp137 is an active-site residue.

It belongs to the GHMP kinase family. IspE subfamily.

It catalyses the reaction 4-CDP-2-C-methyl-D-erythritol + ATP = 4-CDP-2-C-methyl-D-erythritol 2-phosphate + ADP + H(+). The protein operates within isoprenoid biosynthesis; isopentenyl diphosphate biosynthesis via DXP pathway; isopentenyl diphosphate from 1-deoxy-D-xylulose 5-phosphate: step 3/6. Its function is as follows. Catalyzes the phosphorylation of the position 2 hydroxy group of 4-diphosphocytidyl-2C-methyl-D-erythritol. The chain is 4-diphosphocytidyl-2-C-methyl-D-erythritol kinase from Pediococcus pentosaceus (strain ATCC 25745 / CCUG 21536 / LMG 10740 / 183-1w).